The sequence spans 67 residues: Minor structural pilin EpdD (67 aa).

Residues 1-13 (MSVALKKFFSKRG) constitute a propeptide that is removed on maturation. Positions 14–22 (QLSLEFSVL) match the QXSXEXXXL motif.

In terms of processing, the N-terminus is cleaved by the prepilin peptidase EppA, which recognizes the class III signal sequence. N-glycosylated. Glycosylation is AglB-dependent. The N-glycosylation does not occur unless the signal peptide has been cleaved first.

It is found in the secreted. The protein localises to the cell surface. Its subcellular location is the fimbrium. Minor component of the type IV-like pili. Essential for pili formation. The protein is Minor structural pilin EpdD of Methanococcus maripaludis (strain DSM 14266 / JCM 13030 / NBRC 101832 / S2 / LL).